The primary structure comprises 255 residues: Electron transfer flavoprotein beta subunit lysine methyltransferase (255 aa).

A mitochondrion-targeting transit peptide spans 1 to 32 (MAFSLCWKAPRSQWSFLQALNSGFPLFPWRTV).

It belongs to the methyltransferase superfamily. ETFBKMT family. As to quaternary structure, interacts with HSPD1; this protein may possibly be a methylation substrate.

It is found in the cytoplasm. It localises to the mitochondrion matrix. It catalyses the reaction L-lysyl-[protein] + 3 S-adenosyl-L-methionine = N(6),N(6),N(6)-trimethyl-L-lysyl-[protein] + 3 S-adenosyl-L-homocysteine + 3 H(+). Functionally, protein-lysine methyltransferase that selectively trimethylates the flavoprotein ETFB in mitochondria. Thereby, may negatively regulate the function of ETFB in electron transfer from Acyl-CoA dehydrogenases to the main respiratory chain. The chain is Electron transfer flavoprotein beta subunit lysine methyltransferase from Rattus norvegicus (Rat).